The chain runs to 172 residues: NAD(P)H-quinone oxidoreductase subunit J (172 aa).

This sequence belongs to the complex I 30 kDa subunit family. As to quaternary structure, NDH-1 can be composed of about 15 different subunits; different subcomplexes with different compositions have been identified which probably have different functions.

The protein resides in the cellular thylakoid membrane. The catalysed reaction is a plastoquinone + NADH + (n+1) H(+)(in) = a plastoquinol + NAD(+) + n H(+)(out). The enzyme catalyses a plastoquinone + NADPH + (n+1) H(+)(in) = a plastoquinol + NADP(+) + n H(+)(out). Functionally, NDH-1 shuttles electrons from an unknown electron donor, via FMN and iron-sulfur (Fe-S) centers, to quinones in the respiratory and/or the photosynthetic chain. The immediate electron acceptor for the enzyme in this species is believed to be plastoquinone. Couples the redox reaction to proton translocation, and thus conserves the redox energy in a proton gradient. Cyanobacterial NDH-1 also plays a role in inorganic carbon-concentration. This Synechococcus sp. (strain ATCC 27144 / PCC 6301 / SAUG 1402/1) (Anacystis nidulans) protein is NAD(P)H-quinone oxidoreductase subunit J.